Reading from the N-terminus, the 166-residue chain is Large ribosomal subunit protein uL10 (166 aa).

The protein belongs to the universal ribosomal protein uL10 family. In terms of assembly, part of the ribosomal stalk of the 50S ribosomal subunit. The N-terminus interacts with L11 and the large rRNA to form the base of the stalk. The C-terminus forms an elongated spine to which L12 dimers bind in a sequential fashion forming a multimeric L10(L12)X complex.

Functionally, forms part of the ribosomal stalk, playing a central role in the interaction of the ribosome with GTP-bound translation factors. The protein is Large ribosomal subunit protein uL10 of Pseudomonas fluorescens (strain Pf0-1).